Reading from the N-terminus, the 494-residue chain is Glycerol kinase (494 aa).

ADP is bound at residue threonine 12. ATP-binding residues include threonine 12, threonine 13, and serine 14. Threonine 12 is a sn-glycerol 3-phosphate binding site. Arginine 16 lines the ADP pocket. Positions 82, 83, 134, and 241 each coordinate sn-glycerol 3-phosphate. Residues arginine 82, glutamate 83, tyrosine 134, aspartate 241, and glutamine 242 each contribute to the glycerol site. ADP is bound by residues threonine 263 and glycine 306. The ATP site is built by threonine 263, glycine 306, glutamine 310, and glycine 407. Glycine 407 contacts ADP.

The protein belongs to the FGGY kinase family.

The catalysed reaction is glycerol + ATP = sn-glycerol 3-phosphate + ADP + H(+). Its pathway is polyol metabolism; glycerol degradation via glycerol kinase pathway; sn-glycerol 3-phosphate from glycerol: step 1/1. Its activity is regulated as follows. Inhibited by fructose 1,6-bisphosphate (FBP). Its function is as follows. Key enzyme in the regulation of glycerol uptake and metabolism. Catalyzes the phosphorylation of glycerol to yield sn-glycerol 3-phosphate. This Brachyspira hyodysenteriae (strain ATCC 49526 / WA1) protein is Glycerol kinase.